The following is a 329-amino-acid chain: MATGQKLMRAIRVFEFGGPEVLKLQSDVVVPAPQSHQVLIKVHACGVNPVETYIRSGTYSRKPALPYTPGSDVAGIIESVGDGVSAFKKGDRVFCFSTVSGGYAEFALSADNTTYPLPETLDFRQGAALGIPYFTACRALFHSARARAGESVLVHGASGGVGLATCQIARAHGLKVLGTAGSEEGKKLVLQNGAHEVFNHKEANYIDKIKTSAGDKGVDVIIEMLANKNLSNDLKLLSCGGRVIVVGCRGSIEINPRDTMAKETSIIGVSLFSSTKEEFQQFAGILQAGIEKGWVKPVIGSEYPLEKAAQAHEDIIHSSGKMGKMILLL.

A2 carries the N-acetylalanine modification. Residue K23 is modified to N6-acetyllysine. NADP(+)-binding positions include Y53, 158–161 (SGGV), G181, H200, N229, 246–249 (VGCR), and 269–271 (VSL). N6-succinyllysine is present on K296.

It belongs to the zinc-containing alcohol dehydrogenase family. Quinone oxidoreductase subfamily. As to quaternary structure, homotetramer.

Its subcellular location is the cytoplasm. The enzyme catalyses 2 a quinone + NADPH + H(+) = 2 a 1,4-benzosemiquinone + NADP(+). Its function is as follows. Does not have alcohol dehydrogenase activity. Binds NADP and acts through a one-electron transfer process. Orthoquinones, such as 1,2-naphthoquinone or 9,10-phenanthrenequinone, are the best substrates (in vitro). May act in the detoxification of xenobiotics. Interacts with (AU)-rich elements (ARE) in the 3'-UTR of target mRNA species and enhances their stability. NADPH binding interferes with mRNA binding. This is Quinone oxidoreductase (Cryz) from Rattus norvegicus (Rat).